We begin with the raw amino-acid sequence, 151 residues long: Neuroglobin (151 aa).

A Globin domain is found at 1–149 (MERPEPELIR…VVQAMSRGWD (149 aa)). An intrachain disulfide couples Cys46 to Cys55. Heme b contacts are provided by His64 and His96.

This sequence belongs to the globin family. In terms of assembly, monomer. Homodimer and homotetramer; disulfide-linked. Mainly monomeric but also detected as part of homodimers and homotetramers. Interacts with 14-3-3 proteins; regulates the phosphorylation of NGB. Could interact (ferrous form) with G-alpha(i) proteins (GTP-bound form). In terms of processing, phosphorylated during hypoxia by ERK1/ERK2. Phosphorylation regulates the heme pocket hexacoordination preventing the association of His-64 with the heme metal center. Thereby, promotes the access of dioxygen and nitrite to the heme and stimulates the nitrite reductase activity. Phosphorylation during hypoxia is stabilized by 14-3-3 proteins. An intramolecular Cys-46/Cys-55 disulfide bond, not necessarily present in orthologs, regulates the heme pocket hexacoordination preventing the association of His-64 with the heme metal center. Thereby, promotes the access of dioxygen and nitrite to the heme and stimulates the nitrite reductase activity. As to expression, predominantly expressed in brain, the strongest expression is seen in the frontal lobe, the subthalamic nucleus and the thalamus.

The protein localises to the cytoplasm. It is found in the cytosol. It localises to the mitochondrion matrix. The enzyme catalyses Fe(III)-heme b-[protein] + nitric oxide + H2O = Fe(II)-heme b-[protein] + nitrite + 2 H(+). Its function is as follows. Monomeric globin with a bis-histidyl six-coordinate heme-iron atom through which it can bind dioxygen, carbon monoxide and nitric oxide. Could help transport oxygen and increase its availability to the metabolically active neuronal tissues, though its low quantity in tissues as well as its high affinity for dioxygen, which may limit its oxygen-releasing ability, argue against it. The ferrous/deoxygenated form exhibits a nitrite reductase activity and it could produce nitric oxide which in turn inhibits cellular respiration in response to hypoxia. In its ferrous/deoxygenated state, it may also exhibit GDI (Guanine nucleotide Dissociation Inhibitor) activity toward heterotrimeric G-alpha proteins, thereby regulating signal transduction to facilitate neuroprotective responses in the wake of hypoxia and associated oxidative stress. The sequence is that of Neuroglobin from Homo sapiens (Human).